Consider the following 217-residue polypeptide: Probable transaldolase (217 aa).

Lys83 serves as the catalytic Schiff-base intermediate with substrate.

It belongs to the transaldolase family. Type 3B subfamily.

Its subcellular location is the cytoplasm. It carries out the reaction D-sedoheptulose 7-phosphate + D-glyceraldehyde 3-phosphate = D-erythrose 4-phosphate + beta-D-fructose 6-phosphate. It functions in the pathway carbohydrate degradation; pentose phosphate pathway; D-glyceraldehyde 3-phosphate and beta-D-fructose 6-phosphate from D-ribose 5-phosphate and D-xylulose 5-phosphate (non-oxidative stage): step 2/3. Functionally, transaldolase is important for the balance of metabolites in the pentose-phosphate pathway. This is Probable transaldolase from Anaeromyxobacter dehalogenans (strain 2CP-C).